The following is a 1202-amino-acid chain: DNA-directed RNA polymerase subunit beta (1202 aa).

The segment at 1154 to 1202 (NMDEDDDEVVNVDALAKYAEEHKADDKKNEEENKSEATSTTTDDKTNQN) is disordered. A compositionally biased stretch (basic and acidic residues) spans 1171–1188 (YAEEHKADDKKNEEENKS).

The protein belongs to the RNA polymerase beta chain family. In terms of assembly, the RNAP catalytic core consists of 2 alpha, 1 beta, 1 beta' and 1 omega subunit. When a sigma factor is associated with the core the holoenzyme is formed, which can initiate transcription.

The catalysed reaction is RNA(n) + a ribonucleoside 5'-triphosphate = RNA(n+1) + diphosphate. In terms of biological role, DNA-dependent RNA polymerase catalyzes the transcription of DNA into RNA using the four ribonucleoside triphosphates as substrates. This Limosilactobacillus reuteri (strain DSM 20016) (Lactobacillus reuteri) protein is DNA-directed RNA polymerase subunit beta.